The primary structure comprises 399 residues: DJ-1 protein homolog F (399 aa).

2 consecutive PfpI endopeptidase domains span residues 7 to 199 (KSVL…ESLG) and 211 to 394 (TSLL…TALG).

This sequence belongs to the peptidase C56 family. Homotrimer.

Functionally, may be involved in oxidative stress response. This is DJ-1 protein homolog F (DJ1F) from Arabidopsis thaliana (Mouse-ear cress).